Reading from the N-terminus, the 402-residue chain is Propionate kinase (402 aa).

Residues Asn-11 and Lys-18 each coordinate ATP. Residue Asn-11 participates in Mg(2+) binding. Arg-86 serves as a coordination point for substrate. Asp-143 serves as the catalytic Proton donor/acceptor. Residues His-175, 203–207, 278–280, and 326–330 each bind ATP; these read HLGNG, DLR, and GIGEN.

It belongs to the acetokinase family. TdcD subfamily. Homodimer. Requires Mg(2+) as cofactor.

The enzyme catalyses propanoate + ATP = propanoyl phosphate + ADP. It participates in amino-acid degradation; L-threonine degradation via propanoate pathway; propanoate from L-threonine: step 4/4. Its function is as follows. Catalyzes the conversion of propionyl phosphate and ADP to propionate and ATP. The protein is Propionate kinase of Edwardsiella piscicida.